A 627-amino-acid chain; its full sequence is (-)-alpha-pinene synthase 2, chloroplastic (627 aa).

The N-terminal 36 residues, 1-36, are a transit peptide targeting the chloroplast; sequence MALVSIAPLASKSCLHKSLSSSAHELKTICRTIPTL. Positions 378, 382, and 530 each coordinate Mg(2+). Positions 378-382 match the DDXXD motif motif; the sequence is DDMYD.

The protein belongs to the terpene synthase family. Tpsd subfamily. Mg(2+) is required as a cofactor. It depends on Mn(2+) as a cofactor.

It localises to the plastid. Its subcellular location is the chloroplast. It carries out the reaction (2E)-geranyl diphosphate = (1S,5S)-beta-pinene + diphosphate. The catalysed reaction is (2E)-geranyl diphosphate = (1S,5S)-alpha-pinene + diphosphate. Its pathway is terpene metabolism; oleoresin biosynthesis. Functionally, terpene synthase (TPS) involved in the biosynthesis of monoterpene natural products included in conifer oleoresin secretions and volatile emissions; these compounds contribute to biotic and abiotic stress defense against herbivores and pathogens. Catalyzes the conversion of (2E)-geranyl diphosphate (GPP) to (1S,5S)-beta-pinene. This Picea glauca (White spruce) protein is (-)-alpha-pinene synthase 2, chloroplastic.